A 228-amino-acid chain; its full sequence is Large ribosomal subunit protein bL25 (228 aa).

Positions 196–228 are disordered; the sequence is EEAAVAEAQSAESAEGKAEAEAEATNEKNKSEA. A compositionally biased stretch (basic and acidic residues) spans 209–228; sequence AEGKAEAEAEATNEKNKSEA.

The protein belongs to the bacterial ribosomal protein bL25 family. CTC subfamily. In terms of assembly, part of the 50S ribosomal subunit; part of the 5S rRNA/L5/L18/L25 subcomplex. Contacts the 5S rRNA. Binds to the 5S rRNA independently of L5 and L18.

This is one of the proteins that binds to the 5S RNA in the ribosome where it forms part of the central protuberance. The protein is Large ribosomal subunit protein bL25 of Methylorubrum extorquens (strain CM4 / NCIMB 13688) (Methylobacterium extorquens).